A 185-amino-acid polypeptide reads, in one-letter code: dTDP-4-dehydrorhamnose 3,5-epimerase (185 aa).

Residues R23, E28, 47-49 (QDN), and R59 each bind substrate. Catalysis depends on H62, which acts as the Proton acceptor. Substrate is bound by residues K72 and H119. Y132 acts as the Proton donor in catalysis. Substrate is bound by residues D143 and K168.

It belongs to the dTDP-4-dehydrorhamnose 3,5-epimerase family. Homodimer.

It carries out the reaction dTDP-4-dehydro-6-deoxy-alpha-D-glucose = dTDP-4-dehydro-beta-L-rhamnose. The protein operates within carbohydrate biosynthesis; dTDP-L-rhamnose biosynthesis. It functions in the pathway bacterial outer membrane biogenesis; LPS O-antigen biosynthesis. Functionally, catalyzes the epimerization of the C3' and C5'positions of dTDP-6-deoxy-D-xylo-4-hexulose, forming dTDP-6-deoxy-L-lyxo-4-hexulose. In Escherichia coli (strain K12), this protein is dTDP-4-dehydrorhamnose 3,5-epimerase (rfbC).